We begin with the raw amino-acid sequence, 620 residues long: Glutathione-regulated potassium-efflux system protein KefC (620 aa).

12 helical membrane passes run 4 to 24 (HTLL…PIAV), 26 to 46 (LGLG…PWGL), 54 to 74 (SILH…GLEL), 90 to 110 (GALQ…FLGL), 114 to 134 (VAEL…MQAM), 149 to 169 (FAVL…IPLL), 178 to 198 (LGAF…VVLL), 218 to 238 (VFSA…EEVG), 270 to 290 (GLLL…GTLV), 294 to 314 (LRIL…LWLV), 327 to 347 (WFAV…GAAQ), and 359 to 379 (ALTL…VLLT). The RCK N-terminal domain maps to 399–518 (QPRVIVAGFG…AGVAMPERET (120 aa)). The interval 599–620 (QGTAEGKHSGEAADEPEVKPSI) is disordered.

Belongs to the monovalent cation:proton antiporter 2 (CPA2) transporter (TC 2.A.37) family. KefC subfamily. In terms of assembly, homodimer. Interacts with the regulatory subunit KefF.

The protein localises to the cell inner membrane. Pore-forming subunit of a potassium efflux system that confers protection against electrophiles. Catalyzes K(+)/H(+) antiport. The chain is Glutathione-regulated potassium-efflux system protein KefC from Salmonella choleraesuis (strain SC-B67).